Here is a 161-residue protein sequence, read N- to C-terminus: Prs ADP-ribosylating toxin (161 aa).

Belongs to the MbcT/ParT/Res family. Homodimer, forms heterotetrameric ParS(2)-ParT(2) complexes. Post-translationally, consumes NAD(+) and auto-ADP-ribosylates on the tryptic fragment Ala-47-Arg-66 in vitro. Also auto-ADP-ribosylates using NADP(+).

Its function is as follows. Toxic component of a type II toxin-antitoxin (TA) system. Expression in E.coli inhibits cell growth; bacteriostasis is neutralized by expression of cognate antitoxin ParS. ADP-ribosylates E.coli ribose-phosphate pyrophosphokinase (RPPK, prs) using NAD(+) in vitro; ADP-ribosylates RPPK on 'Lys-182' and 'Ser-202'. Cannot use NADP(+). Also auto-ADP-ribosylates in vitro; in the presence of RPPK auto-ADP-ribosylation decreases. In Sphingobium sp. (strain YBL2), this protein is Prs ADP-ribosylating toxin.